Reading from the N-terminus, the 344-residue chain is Phosphate acyltransferase (344 aa).

This sequence belongs to the PlsX family. In terms of assembly, homodimer. Probably interacts with PlsY.

Its subcellular location is the cytoplasm. It catalyses the reaction a fatty acyl-[ACP] + phosphate = an acyl phosphate + holo-[ACP]. The protein operates within lipid metabolism; phospholipid metabolism. Its function is as follows. Catalyzes the reversible formation of acyl-phosphate (acyl-PO(4)) from acyl-[acyl-carrier-protein] (acyl-ACP). This enzyme utilizes acyl-ACP as fatty acyl donor, but not acyl-CoA. This chain is Phosphate acyltransferase, found in Blochmanniella floridana.